Reading from the N-terminus, the 718-residue chain is MRAVLEAADIAVVALYFILVMCIGFFAMWKSNRSTVSGYFLAGRSMTWVAIGASLFVSNIGSEHFIGLAGSGAASGFAVGAWEFNALLLLQLLGWVFIPIYIRSGVYTMPEYLSKRFGGHRIQVYFAALSLLLYIFTKLSVDLYSGALFIQESLGWNLYVSVILLIGMTALLTVTGGLVAVIYTDTLQALLMIIGALTLMVISMVKIGGFEEVKRRYMLASPDVASILLKYNLSNTNACMVHPKANALKMLRDPTDEDVPWPGFILGQTPASVWYWCADQVIVQRVLAAKNIAHAKGSTLMAGFLKLLPMFIIVVPGMISRIVFADEIACINPEHCMQVCGSRAGCSNIAYPRLVMTLVPVGLRGLMMAVMIAALMSDLDSIFNSASTIFTLDVYKLIRKSASSRELMIVGRIFVAFMVVISIAWVPIIVEMQGGQMYLYIQEVADYLTPPVAALFLLAIFWKRCNEQGAFYGGMAGFVLGAVRLILAFTYRAPECDQPDNRPGFIKDIHYMYVATALFWITGLITVIVSLLTPPPTKDQIRTTTFWSKKTLVTKESCSQKDEPYKMQEKSILQCSENSEVISHTIPNGKSEDSIKGLQPEDVNLLVTCREEGNPVASMGHSEAETPVDAYSNGQAALMGEREREKETENRSRYWKFIDWFCGFKSKSLSKRSLRDLMDEEAVCLQMLEETPQVKVILNIGLFAVCSLGIFMFVYFSL.

The Extracellular segment spans residues 1 to 9 (MRAVLEAAD). The helical transmembrane segment at 10–29 (IAVVALYFILVMCIGFFAMW) threads the bilayer. Residues 30-38 (KSNRSTVSG) are Cytoplasmic-facing. The helical transmembrane segment at 39-57 (YFLAGRSMTWVAIGASLFV) threads the bilayer. The Extracellular segment spans residues 58-86 (SNIGSEHFIGLAGSGAASGFAVGAWEFNA). The helical transmembrane segment at 87-110 (LLLLQLLGWVFIPIYIRSGVYTMP) threads the bilayer. Residues 111–123 (EYLSKRFGGHRIQ) lie on the Cytoplasmic side of the membrane. A helical transmembrane segment spans residues 124-144 (VYFAALSLLLYIFTKLSVDLY). The Extracellular segment spans residues 145–157 (SGALFIQESLGWN). A helical transmembrane segment spans residues 158 to 183 (LYVSVILLIGMTALLTVTGGLVAVIY). The Cytoplasmic segment spans residues 184-186 (TDT). A helical transmembrane segment spans residues 187-205 (LQALLMIIGALTLMVISMV). The Extracellular segment spans residues 206–303 (KIGGFEEVKR…HAKGSTLMAG (98 aa)). A glycan (N-linked (GlcNAc...) asparagine) is linked at N232. The helical transmembrane segment at 304-324 (FLKLLPMFIIVVPGMISRIVF) threads the bilayer. Residues 325 to 353 (ADEIACINPEHCMQVCGSRAGCSNIAYPR) are Cytoplasmic-facing. A helical transmembrane segment spans residues 354–376 (LVMTLVPVGLRGLMMAVMIAALM). Over 377 to 406 (SDLDSIFNSASTIFTLDVYKLIRKSASSRE) the chain is Extracellular. A helical transmembrane segment spans residues 407–430 (LMIVGRIFVAFMVVISIAWVPIIV). Topologically, residues 431–443 (EMQGGQMYLYIQE) are cytoplasmic. A helical transmembrane segment spans residues 444 to 462 (VADYLTPPVAALFLLAIFW). Topologically, residues 463-510 (KRCNEQGAFYGGMAGFVLGAVRLILAFTYRAPECDQPDNRPGFIKDIH) are extracellular. A helical transmembrane segment spans residues 511-532 (YMYVATALFWITGLITVIVSLL). Over 533–695 (TPPPTKDQIR…QMLEETPQVK (163 aa)) the chain is Cytoplasmic. A phosphoserine mark is found at S594 and S632. The chain crosses the membrane as a helical span at residues 696–716 (VILNIGLFAVCSLGIFMFVYF). Residues 717-718 (SL) are Extracellular-facing.

It belongs to the sodium:solute symporter (SSF) (TC 2.A.21) family. In terms of assembly, interacts with KCNQ2 (via the pore module). Interacts with KCNQ1; this interaction is direct. Forms coregulatory complexes with ion channels KCNQ2-KCNQ3 and KCNQ1-KCNE2. In terms of tissue distribution, highly expressed in kidney, placenta, and brain and at a lesser extent in thymus, lung, bladder, and testes. Expressed in the choroid plexus epithelium (at protein level).

The protein resides in the apical cell membrane. The protein localises to the basolateral cell membrane. The catalysed reaction is myo-inositol(out) + 2 Na(+)(out) = myo-inositol(in) + 2 Na(+)(in). It catalyses the reaction scyllo-inositol(out) + 2 Na(+)(out) = scyllo-inositol(in) + 2 Na(+)(in). In terms of biological role, electrogenic Na(+)-coupled sugar symporter that actively transports myo-inositol and its stereoisomer scyllo-inositol across the plasma membrane, with a Na(+) to sugar coupling ratio of 2:1. Maintains myo-inositol concentration gradient that defines cell volume and fluid balance during osmotic stress, in particular in the fetoplacental unit and central nervous system. Forms coregulatory complexes with voltage-gated K(+) ion channels, allosterically altering ion selectivity, voltage dependence and gating kinetics of the channel. In turn, K(+) efflux through the channel forms a local electrical gradient that modulates electrogenic Na(+)-coupled myo-inositol influx through the transporter. Associates with KCNQ1-KCNE2 channel in the apical membrane of choroid plexus epithelium and regulates the myo-inositol gradient between blood and cerebrospinal fluid with an impact on neuron excitability. Associates with KCNQ2-KCNQ3 channel altering ion selectivity, increasing Na(+) and Cs(+) permeation relative to K(+) permeation. Provides myo-inositol precursor for biosynthesis of phosphoinositides such as PI(4,5)P2, thus indirectly affecting the activity of phosphoinositide-dependent ion channels and Ca(2+) signaling upon osmotic stress. (Microbial infection) Functions as a retroviral receptor for M813 murine leukemia virus (MuLV) entry. The chain is Sodium/myo-inositol cotransporter (Slc5a3) from Mus musculus (Mouse).